The primary structure comprises 130 residues: Small ribosomal subunit protein uS9 (130 aa).

Belongs to the universal ribosomal protein uS9 family.

The polypeptide is Small ribosomal subunit protein uS9 (Hamiltonella defensa subsp. Acyrthosiphon pisum (strain 5AT)).